A 174-amino-acid polypeptide reads, in one-letter code: Large ribosomal subunit protein uL16 (174 aa).

This sequence belongs to the universal ribosomal protein uL16 family.

This Staphylothermus marinus (strain ATCC 43588 / DSM 3639 / JCM 9404 / F1) protein is Large ribosomal subunit protein uL16.